We begin with the raw amino-acid sequence, 629 residues long: Chaperone protein HtpG (629 aa).

Residues 1 to 343 (MQKQTLSFQA…SSDLPLNVSR (343 aa)) are a; substrate-binding. The tract at residues 344-558 (ELLQESRAVK…DGDMSTQLAR (215 aa)) is b. Positions 559 to 629 (MLKQAGQTVP…YVRRVNALLV (71 aa)) are c.

It belongs to the heat shock protein 90 family. In terms of assembly, homodimer.

The protein resides in the cytoplasm. Functionally, molecular chaperone. Has ATPase activity. The sequence is that of Chaperone protein HtpG from Polaromonas naphthalenivorans (strain CJ2).